The sequence spans 455 residues: Fumarate hydratase class II (455 aa).

Substrate contacts are provided by residues 96–98 (SGT), 122–125 (HPND), 132–134 (SSN), and Thr180. His181 (proton donor/acceptor) is an active-site residue. The active site involves Ser311. Residues Ser312 and 317 to 319 (KVN) contribute to the substrate site.

Belongs to the class-II fumarase/aspartase family. Fumarase subfamily. In terms of assembly, homotetramer.

The protein resides in the cytoplasm. The catalysed reaction is (S)-malate = fumarate + H2O. It functions in the pathway carbohydrate metabolism; tricarboxylic acid cycle; (S)-malate from fumarate: step 1/1. Functionally, involved in the TCA cycle. Catalyzes the stereospecific interconversion of fumarate to L-malate. This chain is Fumarate hydratase class II, found in Listeria monocytogenes serotype 4b (strain F2365).